The primary structure comprises 182 residues: Transcriptional repressor NrdR (182 aa).

The interval Met-1–Ala-24 is disordered. Residues Cys-3–Cys-34 fold into a zinc finger. Over residues Gln-12–Ala-24 the composition is skewed to basic and acidic residues. The 91-residue stretch at Leu-49–Asp-139 folds into the ATP-cone domain. Positions Glu-146 to Glu-182 are disordered. A compositionally biased stretch (basic and acidic residues) spans Asp-156–Lys-172.

The protein belongs to the NrdR family. Requires Zn(2+) as cofactor.

In terms of biological role, negatively regulates transcription of bacterial ribonucleotide reductase nrd genes and operons by binding to NrdR-boxes. The sequence is that of Transcriptional repressor NrdR from Xanthobacter autotrophicus (strain ATCC BAA-1158 / Py2).